The following is a 218-amino-acid chain: Glycerol-3-phosphate acyltransferase 2 (218 aa).

5 helical membrane-spanning segments follow: residues 6–26 (YLLI…VLVG), 50–70 (VMGP…GTLA), 85–105 (LLLI…FLKF), 115–135 (AGVF…VFLP), and 159–179 (FWFH…LLFV).

Belongs to the PlsY family. Probably interacts with PlsX.

It is found in the cell membrane. The catalysed reaction is an acyl phosphate + sn-glycerol 3-phosphate = a 1-acyl-sn-glycero-3-phosphate + phosphate. It functions in the pathway lipid metabolism; phospholipid metabolism. Its function is as follows. Catalyzes the transfer of an acyl group from acyl-phosphate (acyl-PO(4)) to glycerol-3-phosphate (G3P) to form lysophosphatidic acid (LPA). This enzyme utilizes acyl-phosphate as fatty acyl donor, but not acyl-CoA or acyl-ACP. This is Glycerol-3-phosphate acyltransferase 2 from Lactobacillus johnsonii (strain CNCM I-12250 / La1 / NCC 533).